Reading from the N-terminus, the 364-residue chain is RNA polymerase II holoenzyme cyclin-like subunit (364 aa).

Residues 53-143 (QQINRLSKRI…VGECEFSLIS (91 aa)) form the Cyclin N-terminal domain. The segment at 268–303 (PGFGSQGSQQQAGFSQGNSQGSLQGDSAAAEPKKVT) is disordered. A compositionally biased stretch (low complexity) spans 273-289 (QGSQQQAGFSQGNSQGS).

Belongs to the cyclin family. Cyclin C subfamily. In terms of assembly, component of the SRB8-11 complex, a regulatory module of the Mediator complex.

The protein resides in the nucleus. Its function is as follows. Component of the SRB8-11 complex. The SRB8-11 complex is a regulatory module of the Mediator complex which is itself involved in regulation of basal and activated RNA polymerase II-dependent transcription. The SRB8-11 complex may be involved in the transcriptional repression of a subset of genes regulated by Mediator. It may inhibit the association of the Mediator complex with RNA polymerase II to form the holoenzyme complex. The SRB8-11 complex phosphorylates the C-terminal domain (CTD) of the largest subunit of RNA polymerase II. In Chaetomium globosum (strain ATCC 6205 / CBS 148.51 / DSM 1962 / NBRC 6347 / NRRL 1970) (Soil fungus), this protein is RNA polymerase II holoenzyme cyclin-like subunit (SSN8).